The chain runs to 382 residues: MKITRLTTYHAAPRWLFLKVETDEGITGWGEPVIEGRARSVEAAVHELAGYVVGKDPARINDLWQTLYRAGFYRGGAILMSAIAGIDQALWDIKGKALGVPVYELLGGLVRDRMKTYRWVGGDRPGAIIQQITDYRALGFDTFKFNGTEEMKLIDSARAVDAAVVKVAEIRGAFGNTIDFGIDFHGRVGAPMAKALLRELEPFKPLFVEEPVLAEQAEYYPRLAASTSIPLAAGERMFSRFEFKNVLCAGGIGMVQPDLSHAGGITECVKIAAMAEAYDVGFAPHCPLGPIALAACLHVDFVSHNAVLQEQSIGIHYNEGADLLDYVVNKDDFHCVDGSIAALPKPGLGVEIDEEMLKRANENPPDWRNPVWRHSDGSIAEW.

Aspartate 183 provides a ligand contact to Mg(2+). Histidine 185 functions as the Proton donor in the catalytic mechanism. The Mg(2+) site is built by glutamate 209 and glutamate 235. Histidine 285 serves as the catalytic Proton acceptor. Residues 361-382 (NENPPDWRNPVWRHSDGSIAEW) are disordered.

The protein belongs to the mandelate racemase/muconate lactonizing enzyme family. GalD subfamily. Requires Mg(2+) as cofactor.

It catalyses the reaction D-galactonate = 2-dehydro-3-deoxy-D-galactonate + H2O. Its pathway is carbohydrate acid metabolism; D-galactonate degradation; D-glyceraldehyde 3-phosphate and pyruvate from D-galactonate: step 1/3. Its function is as follows. Catalyzes the dehydration of D-galactonate to 2-keto-3-deoxy-D-galactonate. The protein is D-galactonate dehydratase of Xanthomonas axonopodis pv. citri (strain 306).